Consider the following 526-residue polypeptide: Protein spinster homolog 1 (526 aa).

A disordered region spans residues 1–43 (MTSRSSQGDAAPFLTQADNTEEEGAPDPGGHSSDEEEEEGKDH). 12 helical membrane-spanning segments follow: residues 48–68 (HLLTGISYRHSVTIVIILFYI), 98–118 (GLVQTVFICSYMFLAPVFGYL), 126–146 (LIMCIGISFWSLVTLLSSFVS), 159–179 (LVGVGEASYSTIAPTIIADLF), 187–207 (MLSFFYFATPVGCGLGYIAGS), 218–238 (WALRVTPGLGLVAVLLLIFVA), 272–292 (FILSTFGFTTVAFVTGALALW), 321–341 (MIFGGITCVTGVLGVLTGVEI), 355–375 (LVCAVGMISSAPFLYLSLAFA), 385–405 (FIFIGETLLSLNWALVADILL), 419–439 (LQIVVSHLLGDAGSPYLIGVI), and 463–483 (MICAFVGVIGGGFFLATALFI).

It belongs to the major facilitator superfamily. Spinster (TC 2.A.1.49) family.

It localises to the lysosome membrane. The catalysed reaction is a 1-acyl-sn-glycero-3-phosphocholine(out) + H(+)(out) = a 1-acyl-sn-glycero-3-phosphocholine(in) + H(+)(in). The enzyme catalyses a 1-acyl-sn-glycero-3-phosphoethanolamine(out) + H(+)(out) = a 1-acyl-sn-glycero-3-phosphoethanolamine(in) + H(+)(in). It carries out the reaction a 1-O-(1Z-alkenyl)-sn-glycero-3-phosphocholine(out) + H(+)(out) = a 1-O-(1Z-alkenyl)-sn-glycero-3-phosphocholine(in) + H(+)(in). It catalyses the reaction a 1-O-(1Z-alkenyl)-sn-glycero-3-phosphoethanolamine(out) + H(+)(out) = a 1-O-(1Z-alkenyl)-sn-glycero-3-phosphoethanolamine(in) + H(+)(in). In terms of biological role, mediates the rate-limiting, proton-dependent, lysosomal efflux of lysophospholipids. Selective for zwitterionic headgroups such as lysophosphatidylcholine (LPC) and lysophosphatidylethanolamine (LPE). Essential player in lysosomal homeostasis. In Xenopus tropicalis (Western clawed frog), this protein is Protein spinster homolog 1 (spns1).